The sequence spans 154 residues: Large ribosomal subunit protein uL24 (154 aa).

The segment at 97-154 (EIAARKNLPPPEVPEETSNDTKESDENVTGADKEETNEIKEEDLNDNEDKNNDGSQEA) is disordered. Positions 115–135 (NDTKESDENVTGADKEETNEI) are enriched in basic and acidic residues.

Belongs to the universal ribosomal protein uL24 family. In terms of assembly, part of the 50S ribosomal subunit.

In terms of biological role, one of two assembly initiator proteins, it binds directly to the 5'-end of the 23S rRNA, where it nucleates assembly of the 50S subunit. Functionally, located at the polypeptide exit tunnel on the outside of the subunit. This Picrophilus torridus (strain ATCC 700027 / DSM 9790 / JCM 10055 / NBRC 100828 / KAW 2/3) protein is Large ribosomal subunit protein uL24.